A 184-amino-acid polypeptide reads, in one-letter code: Peptidyl-tRNA hydrolase (184 aa).

TRNA is bound at residue Tyr-14. The Proton acceptor role is filled by His-19. Phe-64, Asn-66, and Asn-112 together coordinate tRNA.

It belongs to the PTH family. In terms of assembly, monomer.

It localises to the cytoplasm. The catalysed reaction is an N-acyl-L-alpha-aminoacyl-tRNA + H2O = an N-acyl-L-amino acid + a tRNA + H(+). Hydrolyzes ribosome-free peptidyl-tRNAs (with 1 or more amino acids incorporated), which drop off the ribosome during protein synthesis, or as a result of ribosome stalling. In terms of biological role, catalyzes the release of premature peptidyl moieties from peptidyl-tRNA molecules trapped in stalled 50S ribosomal subunits, and thus maintains levels of free tRNAs and 50S ribosomes. The protein is Peptidyl-tRNA hydrolase of Listeria welshimeri serovar 6b (strain ATCC 35897 / DSM 20650 / CCUG 15529 / CIP 8149 / NCTC 11857 / SLCC 5334 / V8).